The following is a 188-amino-acid chain: dCTP deaminase (188 aa).

DCTP contacts are provided by residues 111–116 (KSTYAR), 135–137 (TLE), Q156, Y170, and Q180. E137 acts as the Proton donor/acceptor in catalysis.

This sequence belongs to the dCTP deaminase family. In terms of assembly, homotrimer.

It carries out the reaction dCTP + H2O + H(+) = dUTP + NH4(+). The protein operates within pyrimidine metabolism; dUMP biosynthesis; dUMP from dCTP (dUTP route): step 1/2. Its function is as follows. Catalyzes the deamination of dCTP to dUTP. The sequence is that of dCTP deaminase from Coxiella burnetii (strain CbuK_Q154) (Coxiella burnetii (strain Q154)).